We begin with the raw amino-acid sequence, 177 residues long: Ribosome rescue factor SmrB (177 aa).

Residues 22–45 (SKKLRQDTIIHQPSKNFSEQQKQR) form a disordered region. A compositionally biased stretch (polar residues) spans 30–41 (IIHQPSKNFSEQ). Residues 98–173 (LDMHGMKQDE…GAGAILVLLS (76 aa)) enclose the Smr domain.

Belongs to the SmrB family. As to quaternary structure, associates with collided ribosomes, but not with correctly translating polysomes.

In terms of biological role, acts as a ribosome collision sensor. Detects stalled/collided disomes (pairs of ribosomes where the leading ribosome is stalled and a second ribosome has collided with it) and endonucleolytically cleaves mRNA at the 5' boundary of the stalled ribosome. Stalled/collided disomes form a new interface (primarily via the 30S subunits) that binds SmrB. Cleaved mRNA becomes available for tmRNA ligation, leading to ribosomal subunit dissociation and rescue of stalled ribosomes. This chain is Ribosome rescue factor SmrB, found in Aliivibrio salmonicida (strain LFI1238) (Vibrio salmonicida (strain LFI1238)).